The chain runs to 169 residues: Nucleoside diphosphate kinase 3-A (169 aa).

ADP-binding residues include lysine 29, arginine 105, threonine 111, arginine 122, valine 129, and asparagine 132. Histidine 135 acts as the Pros-phosphohistidine intermediate in catalysis.

This sequence belongs to the NDK family. In terms of assembly, homohexamer. Mg(2+) is required as a cofactor.

It is found in the mitochondrion outer membrane. The protein localises to the cytoplasm. It localises to the cytoskeleton. Its subcellular location is the cilium basal body. The enzyme catalyses a 2'-deoxyribonucleoside 5'-diphosphate + ATP = a 2'-deoxyribonucleoside 5'-triphosphate + ADP. It catalyses the reaction a ribonucleoside 5'-diphosphate + ATP = a ribonucleoside 5'-triphosphate + ADP. Its function is as follows. Catalyzes the phosphorylation of ribonucleosides and deoxyribonucleoside diphosphates, other than ATP, into the corresponding triphosphates with ATP as the major phosphate donor. The ATP gamma phosphate is transferred to the nucleoside diphosphate beta phosphate via a ping-pong mechanism, using a phosphorylated active-site intermediate. Through the catalyzed exchange of gamma-phosphate between di- and triphosphonucleosides participates in regulation of intracellular nucleotide homeostasis. Required for ciliary function during renal development. Independently of its kinase activity, facilitates mitochondrial tethering prior to membrane fusion through its direct membrane-binding and hexamerization. Implicated in repair of both single- and double-stranded breaks in DNA, independently of its kinase activity. The protein is Nucleoside diphosphate kinase 3-A of Xenopus laevis (African clawed frog).